Here is a 295-residue protein sequence, read N- to C-terminus: Ribosomal protein L11 methyltransferase (295 aa).

T146, G167, D189, and N231 together coordinate S-adenosyl-L-methionine.

Belongs to the methyltransferase superfamily. PrmA family.

The protein resides in the cytoplasm. The enzyme catalyses L-lysyl-[protein] + 3 S-adenosyl-L-methionine = N(6),N(6),N(6)-trimethyl-L-lysyl-[protein] + 3 S-adenosyl-L-homocysteine + 3 H(+). Its function is as follows. Methylates ribosomal protein L11. The sequence is that of Ribosomal protein L11 methyltransferase from Vibrio vulnificus (strain CMCP6).